The sequence spans 239 residues: Ribosomal RNA small subunit methyltransferase G (239 aa).

S-adenosyl-L-methionine-binding positions include Gly-78, Phe-83, 129–130 (AE), and Arg-148.

It belongs to the methyltransferase superfamily. RNA methyltransferase RsmG family.

It is found in the cytoplasm. Functionally, specifically methylates the N7 position of a guanine in 16S rRNA. This chain is Ribosomal RNA small subunit methyltransferase G, found in Clostridium botulinum (strain Alaska E43 / Type E3).